The chain runs to 420 residues: Exodeoxyribonuclease 7 large subunit (420 aa).

It belongs to the XseA family. In terms of assembly, heterooligomer composed of large and small subunits.

The protein localises to the cytoplasm. It carries out the reaction Exonucleolytic cleavage in either 5'- to 3'- or 3'- to 5'-direction to yield nucleoside 5'-phosphates.. Its function is as follows. Bidirectionally degrades single-stranded DNA into large acid-insoluble oligonucleotides, which are then degraded further into small acid-soluble oligonucleotides. This Helicobacter pylori (strain P12) protein is Exodeoxyribonuclease 7 large subunit.